The sequence spans 546 residues: Glucose-6-phosphate isomerase 1 (546 aa).

Residue Glu353 is the Proton donor of the active site. Residues His384 and Lys512 contribute to the active site.

This sequence belongs to the GPI family.

The protein resides in the cytoplasm. The enzyme catalyses alpha-D-glucose 6-phosphate = beta-D-fructose 6-phosphate. It participates in carbohydrate biosynthesis; gluconeogenesis. The protein operates within carbohydrate degradation; glycolysis; D-glyceraldehyde 3-phosphate and glycerone phosphate from D-glucose: step 2/4. Its function is as follows. Catalyzes the reversible isomerization of glucose-6-phosphate to fructose-6-phosphate. The sequence is that of Glucose-6-phosphate isomerase 1 from Colwellia psychrerythraea (strain 34H / ATCC BAA-681) (Vibrio psychroerythus).